Reading from the N-terminus, the 335-residue chain is Peroxidase 2 (335 aa).

The first 29 residues, 1 to 29 (MAAATAPKTMPSSVFAAALLLLAAAACQA), serve as a signal peptide directing secretion. 4 disulfide bridges follow: C44–C125, C77–C82, C131–C329, and C212–C238. Catalysis depends on H75, which acts as the Proton acceptor. Ca(2+) is bound by residues D76, V79, G81, D83, and S85. 2 N-linked (GlcNAc...) asparagine glycosylation sites follow: N166 and N180. H205 provides a ligand contact to heme b. Position 206 (T206) interacts with Ca(2+). A glycan (N-linked (GlcNAc...) asparagine) is linked at N241. Ca(2+)-binding residues include D253, T256, and D261.

This sequence belongs to the peroxidase family. Classical plant (class III) peroxidase subfamily. Heme b is required as a cofactor. The cofactor is Ca(2+). As to expression, expressed in the elongating region of young roots, and in root vascular tissues and epidermis.

It localises to the secreted. It catalyses the reaction 2 a phenolic donor + H2O2 = 2 a phenolic radical donor + 2 H2O. Functionally, removal of H(2)O(2), oxidation of toxic reductants, biosynthesis and degradation of lignin, suberization, auxin catabolism, response to environmental stresses such as wounding, pathogen attack and oxidative stress. These functions might be dependent on each isozyme/isoform in each plant tissue. This chain is Peroxidase 2 (PER2), found in Zea mays (Maize).